The sequence spans 98 residues: NADH-ubiquinone oxidoreductase chain 4L (98 aa).

3 helical membrane-spanning segments follow: residues 1-21 (MTPTHFTISSAFLLGMMGLAF), 26-46 (LLSALLCLEAMMLALFIALSL), and 59-79 (APMLMLAFSACEASAGLALLV).

The protein belongs to the complex I subunit 4L family.

It localises to the mitochondrion membrane. The catalysed reaction is a ubiquinone + NADH + 5 H(+)(in) = a ubiquinol + NAD(+) + 4 H(+)(out). Its function is as follows. Core subunit of the mitochondrial membrane respiratory chain NADH dehydrogenase (Complex I) which catalyzes electron transfer from NADH through the respiratory chain, using ubiquinone as an electron acceptor. Part of the enzyme membrane arm which is embedded in the lipid bilayer and involved in proton translocation. The sequence is that of NADH-ubiquinone oxidoreductase chain 4L (MT-ND4L) from Gadus morhua (Atlantic cod).